The chain runs to 124 residues: T cell receptor beta variable 13 (124 aa).

The signal sequence occupies residues M1 to A31. An Ig-like domain is found at G32 to L124. The cysteines at positions 52 and 120 are disulfide-linked. N-linked (GlcNAc...) asparagine glycosylation occurs at N106.

Alpha-beta TR is a heterodimer composed of an alpha and beta chain; disulfide-linked. The alpha-beta TR is associated with the transmembrane signaling CD3 coreceptor proteins to form the TR-CD3 (TcR or TCR). The assembly of alpha-beta TR heterodimers with CD3 occurs in the endoplasmic reticulum where a single alpha-beta TR heterodimer associates with one CD3D-CD3E heterodimer, one CD3G-CD3E heterodimer and one CD247 homodimer forming a stable octameric structure. CD3D-CD3E and CD3G-CD3E heterodimers preferentially associate with TR alpha and TR beta chains, respectively. The association of the CD247 homodimer is the last step of TcR assembly in the endoplasmic reticulum and is required for transport to the cell surface.

The protein localises to the cell membrane. Its function is as follows. V region of the variable domain of T cell receptor (TR) beta chain that participates in the antigen recognition. Alpha-beta T cell receptors are antigen specific receptors which are essential to the immune response and are present on the cell surface of T lymphocytes. Recognize peptide-major histocompatibility (MH) (pMH) complexes that are displayed by antigen presenting cells (APC), a prerequisite for efficient T cell adaptive immunity against pathogens. Binding of alpha-beta TR to pMH complex initiates TR-CD3 clustering on the cell surface and intracellular activation of LCK that phosphorylates the ITAM motifs of CD3G, CD3D, CD3E and CD247 enabling the recruitment of ZAP70. In turn ZAP70 phosphorylates LAT, which recruits numerous signaling molecules to form the LAT signalosome. The LAT signalosome propagates signal branching to three major signaling pathways, the calcium, the mitogen-activated protein kinase (MAPK) kinase and the nuclear factor NF-kappa-B (NF-kB) pathways, leading to the mobilization of transcription factors that are critical for gene expression and essential for T cell growth and differentiation. The T cell repertoire is generated in the thymus, by V-(D)-J rearrangement. This repertoire is then shaped by intrathymic selection events to generate a peripheral T cell pool of self-MH restricted, non-autoaggressive T cells. Post-thymic interaction of alpha-beta TR with the pMH complexes shapes TR structural and functional avidity. The chain is T cell receptor beta variable 13 from Homo sapiens (Human).